The chain runs to 153 residues: Prefoldin subunit alpha (153 aa).

This sequence belongs to the prefoldin subunit alpha family. In terms of assembly, heterohexamer of two alpha and four beta subunits.

The protein localises to the cytoplasm. Molecular chaperone capable of stabilizing a range of proteins. Seems to fulfill an ATP-independent, HSP70-like function in archaeal de novo protein folding. The polypeptide is Prefoldin subunit alpha (Methanothrix thermoacetophila (strain DSM 6194 / JCM 14653 / NBRC 101360 / PT) (Methanosaeta thermophila)).